Consider the following 726-residue polypeptide: Catalase-peroxidase (726 aa).

Positions 91 to 214 (WHSAGTYRIA…LGAVQMGLIY (124 aa)) form a cross-link, tryptophyl-tyrosyl-methioninium (Trp-Tyr) (with M-240). Histidine 92 serves as the catalytic Proton acceptor. Positions 214–240 (YVNPEGPNGNPDPLAAARDIRETFARM) form a cross-link, tryptophyl-tyrosyl-methioninium (Tyr-Met) (with W-91). Residue histidine 255 participates in heme b binding. A disordered region spans residues 335-362 (AHQWRPKAGAGADSVPDPHDPNKRRTPS).

It belongs to the peroxidase family. Peroxidase/catalase subfamily. Homodimer or homotetramer. The cofactor is heme b. Post-translationally, formation of the three residue Trp-Tyr-Met cross-link is important for the catalase, but not the peroxidase activity of the enzyme.

The enzyme catalyses H2O2 + AH2 = A + 2 H2O. It carries out the reaction 2 H2O2 = O2 + 2 H2O. In terms of biological role, bifunctional enzyme with both catalase and broad-spectrum peroxidase activity. The protein is Catalase-peroxidase of Pseudomonas fluorescens (strain ATCC BAA-477 / NRRL B-23932 / Pf-5).